We begin with the raw amino-acid sequence, 246 residues long: Large ribosomal subunit protein uL3 (246 aa).

Position 151 is an N5-methylglutamine (Gln151).

The protein belongs to the universal ribosomal protein uL3 family. In terms of assembly, part of the 50S ribosomal subunit. Forms a cluster with proteins L14 and L19. In terms of processing, methylated by PrmB.

Its function is as follows. One of the primary rRNA binding proteins, it binds directly near the 3'-end of the 23S rRNA, where it nucleates assembly of the 50S subunit. In Bartonella henselae (strain ATCC 49882 / DSM 28221 / CCUG 30454 / Houston 1) (Rochalimaea henselae), this protein is Large ribosomal subunit protein uL3.